The sequence spans 211 residues: MLMEKYHDFEPNFNIVEIFESLQGEGFNTGMPSVFVRFGKCNLDCPWCDTPYNNFKRWSVSQILEKVRSFSSKNIIITGGEPTIVPKIEYLLEQFKSDGYFLAIETNGLKAIPAQIDYIATSPKSLYAHKYEKRCIPFANEVRIVMDSNMPSFCELIEQKIKAKNYYLSPCEIDGKMNLLETITLLGQLNQRSNKPKWQLSLQTHKLIGIE.

Substrate-binding positions include 22 to 24 (LQG) and R37. One can recognise a Radical SAM core domain in the interval 28 to 211 (NTGMPSVFVR…LQTHKLIGIE (184 aa)). The [4Fe-4S] cluster site is built by C41, C45, and C48. Mg(2+) is bound at residue T50. Substrate is bound at residue T78. Residues G80 and 122–124 (SPK) each bind S-adenosyl-L-methionine.

The protein belongs to the radical SAM superfamily. 7-carboxy-7-deazaguanine synthase family. In terms of assembly, homodimer. The cofactor is [4Fe-4S] cluster. S-adenosyl-L-methionine is required as a cofactor. Mg(2+) serves as cofactor.

It carries out the reaction 6-carboxy-5,6,7,8-tetrahydropterin + H(+) = 7-carboxy-7-deazaguanine + NH4(+). It functions in the pathway purine metabolism; 7-cyano-7-deazaguanine biosynthesis. Its function is as follows. Catalyzes the complex heterocyclic radical-mediated conversion of 6-carboxy-5,6,7,8-tetrahydropterin (CPH4) to 7-carboxy-7-deazaguanine (CDG), a step common to the biosynthetic pathways of all 7-deazapurine-containing compounds. The polypeptide is 7-carboxy-7-deazaguanine synthase (Haemophilus influenzae (strain ATCC 51907 / DSM 11121 / KW20 / Rd)).